The primary structure comprises 521 residues: Anaerobic nitric oxide reductase flavorubredoxin (521 aa).

Residues 30–210 form a zinc metallo-hydrolase region; sequence HKGTSYNSYL…PFSPLVTAKI (181 aa). Positions 79, 81, 83, 147, 166, and 227 each coordinate Fe cation. The Flavodoxin-like domain occupies 254 to 393; it reads ITLFYDSMSN…LCREHGRQLA (140 aa). FMN contacts are provided by residues 260 to 264 and 342 to 369; these read SMSNN and AFGS…DISI. The Rubredoxin-like domain occupies 464-515; that stretch reads DQPMLCTVCQWIYDPALGEPDQLVAPGTPWARVPDSFLCPGCGIGKEVFEPC. Fe cation contacts are provided by Cys469, Cys472, Cys502, and Cys505.

It in the N-terminal section; belongs to the zinc metallo-hydrolase group 3 family. As to quaternary structure, homotetramer. The cofactor is Fe cation. It depends on FMN as a cofactor.

Its subcellular location is the cytoplasm. Its pathway is nitrogen metabolism; nitric oxide reduction. In terms of biological role, anaerobic nitric oxide reductase; uses NADH to detoxify nitric oxide (NO), protecting several 4Fe-4S NO-sensitive enzymes. Has at least 2 reductase partners, only one of which (NorW, flavorubredoxin reductase) has been identified. NO probably binds to the di-iron center; electrons enter from the NorW at rubredoxin and are transferred sequentially to the FMN center and the di-iron center. Also able to function as an aerobic oxygen reductase. The chain is Anaerobic nitric oxide reductase flavorubredoxin from Aeromonas salmonicida (strain A449).